Here is a 366-residue protein sequence, read N- to C-terminus: Phospho-N-acetylmuramoyl-pentapeptide-transferase (366 aa).

10 helical membrane passes run 3 to 23 (QIII…PVLI), 52 to 72 (MGGI…GIVG), 80 to 100 (LTAS…LGFA), 120 to 140 (LIGQ…FPNA), 161 to 181 (LAIG…YILI), 197 to 217 (LAAG…FWQF), 238 to 258 (LAIL…WNAA), 262 to 282 (IFMG…LSVA), 287 to 307 (LLMI…VIQV), and 341 to 361 (FWLI…GEWL).

The protein belongs to the glycosyltransferase 4 family. MraY subfamily. The cofactor is Mg(2+).

It localises to the cell membrane. It catalyses the reaction UDP-N-acetyl-alpha-D-muramoyl-L-alanyl-gamma-D-glutamyl-meso-2,6-diaminopimeloyl-D-alanyl-D-alanine + di-trans,octa-cis-undecaprenyl phosphate = di-trans,octa-cis-undecaprenyl diphospho-N-acetyl-alpha-D-muramoyl-L-alanyl-D-glutamyl-meso-2,6-diaminopimeloyl-D-alanyl-D-alanine + UMP. It functions in the pathway cell wall biogenesis; peptidoglycan biosynthesis. Catalyzes the initial step of the lipid cycle reactions in the biosynthesis of the cell wall peptidoglycan: transfers peptidoglycan precursor phospho-MurNAc-pentapeptide from UDP-MurNAc-pentapeptide onto the lipid carrier undecaprenyl phosphate, yielding undecaprenyl-pyrophosphoryl-MurNAc-pentapeptide, known as lipid I. The protein is Phospho-N-acetylmuramoyl-pentapeptide-transferase of Corynebacterium diphtheriae (strain ATCC 700971 / NCTC 13129 / Biotype gravis).